The chain runs to 385 residues: WD repeat-containing protein 74 (385 aa).

6 WD repeats span residues 40–80 (RREE…FQGQ), 83–122 (CPGGEGTFRGLAQVDGTLITCVDSGILRVWTDKDKEASSD), 128–168 (RVGP…EPLF), 179–220 (DLRV…RRPV), 224–266 (TYGE…GCLK), and 267–306 (GLAGSVRGLQCHPSKPLLASCGLDRVLRIHRIRNPRGLEH). Ser214 bears the Phosphoserine mark. At Lys311 the chain carries N6-methyllysine. The interval 320 to 385 (SGRDNWEDEP…KKKRPGSTSS (66 aa)) is required for nucleolar and nuclear location. The interval 323-385 (DNWEDEPQEP…KKKRPGSTSS (63 aa)) is disordered. Over residues 372–385 (ARRRKKKRPGSTSS) the composition is skewed to basic residues.

Isoform 1 interacts (through WDR repeats) with NVL; the interaction is independent of RNA or pre-60S ribosome particles. Isoform 2 does not interact with NVL. Interacts with MTREX; the interaction dissociation in a late stage of rRNA synthesis is required for appropriate maturation of pre-60S particles and depends on the ATPase activity of NVL.

The protein resides in the nucleus. It is found in the nucleolus. Regulatory protein of the MTREX-exosome complex involved in the synthesis of the 60S ribosomal subunit. Participates in an early cleavage of the pre-rRNA processing pathway in cooperation with NVL. This is WD repeat-containing protein 74 (WDR74) from Bos taurus (Bovine).